Here is a 187-residue protein sequence, read N- to C-terminus: Large ribosomal subunit protein bL17 (187 aa).

Residues 122–187 (PKVRSSRTST…EADAAEKSDK (66 aa)) form a disordered region. The segment covering 127 to 144 (SRTSTATAPAAAAPAAEA) has biased composition (low complexity). Acidic residues-rich tracts occupy residues 145–157 (PAEESDVPVEETD) and 165–180 (TPAETTDEAAAEVEAD).

Belongs to the bacterial ribosomal protein bL17 family. As to quaternary structure, part of the 50S ribosomal subunit. Contacts protein L32.

This Clavibacter michiganensis subsp. michiganensis (strain NCPPB 382) protein is Large ribosomal subunit protein bL17.